The sequence spans 291 residues: 3-hydroxy-5-phosphonooxypentane-2,4-dione thiolase (291 aa).

The Schiff-base intermediate with substrate role is filled by Lys-203.

This sequence belongs to the DeoC/FbaB aldolase family. In terms of assembly, homodecamer.

It localises to the cytoplasm. It catalyses the reaction dihydroxyacetone phosphate + acetyl-CoA = 3-hydroxy-2,4-dioxopentyl phosphate + CoA. Functionally, involved in the degradation of phospho-AI-2, thereby terminating induction of the lsr operon and closing the AI-2 signaling cycle. Catalyzes the transfer of an acetyl moiety from 3-hydroxy-5-phosphonooxypentane-2,4-dione to CoA to form glycerone phosphate and acetyl-CoA. The chain is 3-hydroxy-5-phosphonooxypentane-2,4-dione thiolase from Yersinia pseudotuberculosis serotype O:1b (strain IP 31758).